We begin with the raw amino-acid sequence, 193 residues long: Imidazoleglycerol-phosphate dehydratase (193 aa).

It belongs to the imidazoleglycerol-phosphate dehydratase family.

Its subcellular location is the cytoplasm. It carries out the reaction D-erythro-1-(imidazol-4-yl)glycerol 3-phosphate = 3-(imidazol-4-yl)-2-oxopropyl phosphate + H2O. It functions in the pathway amino-acid biosynthesis; L-histidine biosynthesis; L-histidine from 5-phospho-alpha-D-ribose 1-diphosphate: step 6/9. This is Imidazoleglycerol-phosphate dehydratase from Saccharolobus islandicus (strain M.14.25 / Kamchatka #1) (Sulfolobus islandicus).